Reading from the N-terminus, the 549-residue chain is Probable glucuronosyltransferase Os01g0157700 (549 aa).

Topologically, residues 1–16 (MDSEERSKKRLRLWSR) are cytoplasmic. A helical; Signal-anchor for type II membrane protein transmembrane segment spans residues 17–37 (AVVHFSLCFAIGVFAALLPLA). Topologically, residues 38–549 (ATGATSIDSI…TPEEGKTKEG (512 aa)) are lumenal. Asn-112, Asn-139, Asn-214, Asn-229, Asn-240, Asn-251, Asn-264, Asn-269, and Asn-300 each carry an N-linked (GlcNAc...) asparagine glycan. Residues 232–252 (ETTWDSSSNTTQTTWDSSSNK) are disordered. The segment covering 350–363 (IEQATPEKESLTKG) has biased composition (basic and acidic residues). Disordered stretches follow at residues 350–371 (IEQA…SHDM), 413–432 (EQET…ESHD), and 441–524 (KIEE…KETH). N-linked (GlcNAc...) asparagine glycosylation is found at Asn-421 and Asn-452. Basic and acidic residues-rich tracts occupy residues 441-465 (KIEE…HDMM), 472-496 (KIDE…HDMM), and 503-524 (KIEE…KETH).

It belongs to the glycosyltransferase 43 family.

Its subcellular location is the golgi apparatus membrane. Involved in the synthesis of glucuronoxylan hemicellulose in secondary cell walls. In Oryza sativa subsp. japonica (Rice), this protein is Probable glucuronosyltransferase Os01g0157700.